A 299-amino-acid polypeptide reads, in one-letter code: Taste receptor type 2 member 5 (299 aa).

Position 1 (methionine 1) is a topological domain, extracellular. Residues 2 to 22 (LSAGLGLLMLVAVIEFLIGLI) traverse the membrane as a helical segment. Topologically, residues 23 to 45 (GNGILVVWSLREWIRKFSWSSYN) are cytoplasmic. The chain crosses the membrane as a helical span at residues 46 to 66 (LIILGLAGCRFLLQWLIILDL). At 67–82 (SLFPLFQSSSWLRYLN) the chain is on the extracellular side. The chain crosses the membrane as a helical span at residues 83–103 (VFWVLVSQASLWFATFLSVFY). Topologically, residues 104–127 (CKKITTFDRPAYLWLKQRAYNLSL) are cytoplasmic. A helical membrane pass occupies residues 128-148 (WCLLGYFIISLLLTVQVGLTV). Over 149-175 (HHPPQGNSSIRYPFEHWQYLYVFQLNS) the chain is Extracellular. N-linked (GlcNAc...) asparagine glycosylation is present at asparagine 155. The chain crosses the membrane as a helical span at residues 176 to 196 (GSYLPLMVFLVSSGMLIISLY). At 197 to 223 (THHKKMKVHSAGRRDARAKAHITALKS) the chain is on the cytoplasmic side. A helical transmembrane segment spans residues 224–244 (LGCFLLLHLVYIVASPFSITS). Over 245-253 (KTYPPDLTS) the chain is Extracellular. Residues 254–274 (VFIWETLMAAYPSLHSLMLIM) form a helical membrane-spanning segment. The Cytoplasmic portion of the chain corresponds to 275–299 (GIPRVKQTCQKILWKTVCARRCWGP).

This sequence belongs to the G-protein coupled receptor T2R family.

The protein resides in the membrane. Its function is as follows. Receptor that may play a role in the perception of bitterness and is gustducin-linked. May play a role in sensing the chemical composition of the gastrointestinal content. The activity of this receptor may stimulate alpha gustducin, mediate PLC-beta-2 activation and lead to the gating of TRPM5. The sequence is that of Taste receptor type 2 member 5 (TAS2R5) from Papio hamadryas (Hamadryas baboon).